The sequence spans 7214 residues: Nonribosomal peptide synthetase atnA (7214 aa).

The segment at 257-651 (ERKALEQPHA…VGRKDTQVKI (395 aa)) is adenylation 1. Residues 786–862 (EPVTETEKAV…AMSQIAVELS (77 aa)) form the Carrier 1 domain. Ser823 bears the O-(pantetheine 4'-phosphoryl)serine mark. The segment at 899–1318 (EDAYPATALQ…LVSQKDYTQI (420 aa)) is condensation 1. The interval 1340–1735 (QVLATPDAPA…ARKDTQAKVR (396 aa)) is adenylation 2. Positions 1877 to 1953 (QPTSDIEKKV…ALAGRAQYIE (77 aa)) constitute a Carrier 2 domain. Ser1914 is subject to O-(pantetheine 4'-phosphoryl)serine. The interval 1962–2384 (PEAEVIDEWF…RQVLETGIDE (423 aa)) is epimerization. The condensation 2 stretch occupies residues 2431 to 2845 (SPCSPMQLGL…MLSPLDRASL (415 aa)). The adenylation 3 stretch occupies residues 2866 to 3262 (QNARKRPHAL…VGRKDTQVKV (397 aa)). Residues 3398–3472 (ALETPMEETI…DMARIVVAAY (75 aa)) form the Carrier 3 domain. An O-(pantetheine 4'-phosphoryl)serine modification is found at Ser3433. A condensation 3 region spans residues 3510-3904 (VEDVYPSTSL…QLCENEDGRL (395 aa)). The interval 3943-4339 (ERARLHPDLL…VGRKDSQVKL (397 aa)) is adenylation 4. The 77-residue stretch at 4476–4552 (VPGSEAEKVI…ELAGRVTSIS (77 aa)) folds into the Carrier 4 domain. Ser4513 carries the post-translational modification O-(pantetheine 4'-phosphoryl)serine. The segment at 4601–5033 (VEDVYPCSPL…TSAAMRAQLL (433 aa)) is condensation 4. The segment at 5051 to 5446 (FHRTALRYPE…VGRKDTQIKF (396 aa)) is adenylation 5. Residues 5489-5515 (FITTEGGSGHENKGSPSLKGSSGDPVS) are disordered. One can recognise a Carrier 5 domain in the interval 5591–5667 (APRTAMEKRL…QMANIVARNA (77 aa)). Ser5628 carries the post-translational modification O-(pantetheine 4'-phosphoryl)serine. The interval 5707-6123 (QDVYPCTPLQ…HLLGDNEIKM (417 aa)) is condensation 5. An adenylation 6 region spans residues 6145-6543 (ERAVLQPEAI…GRKDTQIKLR (399 aa)). The Carrier 6 domain occupies 6683–6766 (DPADKLALAL…DVARMIEHGN (84 aa)). Ser6725 is modified (O-(pantetheine 4'-phosphoryl)serine). Residues 6814–7194 (ILLTGATGFL…KSISYMRQIG (381 aa)) are thioesterase (TE) domain. The segment at 6895–6915 (STVEGRDHPGSESGSTAGPAE) is disordered.

It belongs to the NRP synthetase family.

The protein operates within secondary metabolite biosynthesis. Nonribosomal peptide synthetase; part of the gene cluster that mediates the biosynthesis of aspercryptins, linear lipopeptides built from six amino acids including 2 highly unusual and nonproteogenic amino acids, 2-amino-octanoic acid (2aoa) and 2-amino-dodecanol (2adol). The core structure of aspercryptins is as follows: Ser/Ala-Thr-Ile/Val-2aoa-Asn-2adol. The first step of aspercryptin biosynthesis is the generation of the fatty acid precursors, octanoic and dodecanoic acids, by the FAS subunits atnF and atnM. The fatty acid precursors are likely transformed into the corresponding alpha-amino fatty acids in three steps. First, they are hydroxylated by the cytochrome P450 monooxygenase atnE, then oxidized to the corresponding alpha-keto acids by the NAD(P)-dependent oxidoreductase atnD, and finally converted to the alpha-amino fatty acids by the PLP-dependent aminotransferases atnH or atnJ. the alpha-amino fatty acids, 2-amino-octanoic and 2-amino-dodecanoic acids, are recognized, activated, and covalently tethered to the NRPS atnA by its fourth and sixth adenylation domains. The second module of atnA is the Thr module and contains an epimerase (E) domain responsible for the epimerization of Thr to D-allo-Thr. Additionally, despite atnA having only one epimerase domain, the first amino acid of aspercryptin A1 is D-Ser, suggesting that serine is either loaded directly as D-Ser on the first module or that the epimerase domain in the threonine module epimerizes both L-Ser and L-Thr. After condensation of the hexapeptide of aspercryptin, the C-terminal reductase (TE) domain might be involved in the reductive release and production of the aldehyde hexapeptide. Further reduction would generate aspercryptins. The variety of aspercryptins produced reflects the flexibility of the atnA NRPS, allowing incorporation of alanine instead of serine, valine for isoleucine, and a C10 fatty amino alcohol instead of the C12 version. AtnB seems to be involved in the selectivity for Ile versus Val by the third module. Moreover, type B, C and D aspercryptins have an additional N-terminal cichorine, acetyl and propionyl group respectively. This is Nonribosomal peptide synthetase atnA from Emericella nidulans (strain FGSC A4 / ATCC 38163 / CBS 112.46 / NRRL 194 / M139) (Aspergillus nidulans).